The chain runs to 289 residues: Secretory carrier-associated membrane protein (289 aa).

The interval 1–65 (MAGRYDPNPF…TSTDGKKKER (65 aa)) is disordered. At 1 to 123 (MAGRYDPNPF…EIPIHLRTLQ (123 aa)) the chain is on the cytoplasmic side. Residues 16–31 (NPFSNPRSAASATNSR) are compositionally biased toward polar residues. A coiled-coil region spans residues 59-98 (DGKKKERDLQAKEAELRKREQEVRRKEEAIARAGIVIEEK). 4 consecutive transmembrane segments (helical) span residues 124–144 (YVAFFSLLGLVLCLTWNVVSV), 156–176 (IWFLAIIYFIAGVPGAYALWY), 191–211 (FGWFFMFYLLHIGFCILAAVA), and 239–259 (IFYFIGFGFFCLETLISIWVI). Over 260 to 289 (QQVYMHFRGGGKTAEMKREAALGAMGAALR) the chain is Cytoplasmic.

Belongs to the SCAMP family.

It is found in the cell membrane. The protein resides in the cytoplasmic vesicle. The protein localises to the secretory vesicle membrane. Functionally, probably involved in membrane trafficking. The polypeptide is Secretory carrier-associated membrane protein (PSAM2) (Pisum sativum (Garden pea)).